The chain runs to 125 residues: Large ribosomal subunit protein bL17 (125 aa).

The protein belongs to the bacterial ribosomal protein bL17 family. Part of the 50S ribosomal subunit. Contacts protein L32.

This Acinetobacter baylyi (strain ATCC 33305 / BD413 / ADP1) protein is Large ribosomal subunit protein bL17.